Consider the following 150-residue polypeptide: MLEVNILDKKWCSIIENPKNFVLGVINASLKELKIDHYKPNISIALADDDLLHQLNLKFREMDKPTNVLSFPYEQLSNECDLGDIAISIDTIKRESHEYYIPILAHIAHMLVHGLLHLLGYDHQKKDEEIIMKNLEREILASLGYNMCAI.

Residues His-113, His-117, and His-123 each coordinate Zn(2+).

This sequence belongs to the endoribonuclease YbeY family. The cofactor is Zn(2+).

The protein resides in the cytoplasm. Functionally, single strand-specific metallo-endoribonuclease involved in late-stage 70S ribosome quality control and in maturation of the 3' terminus of the 16S rRNA. This is Endoribonuclease YbeY from Wolbachia sp. subsp. Drosophila simulans (strain wRi).